Here is an 80-residue protein sequence, read N- to C-terminus: Acyl carrier protein (80 aa).

In terms of domain architecture, Carrier spans 4–79 (QEIFEKVKAV…DAVEYIKAKL (76 aa)). O-(pantetheine 4'-phosphoryl)serine is present on serine 39.

This sequence belongs to the acyl carrier protein (ACP) family. In terms of processing, 4'-phosphopantetheine is transferred from CoA to a specific serine of apo-ACP by AcpS. This modification is essential for activity because fatty acids are bound in thioester linkage to the sulfhydryl of the prosthetic group.

The protein resides in the cytoplasm. Its pathway is lipid metabolism; fatty acid biosynthesis. Carrier of the growing fatty acid chain in fatty acid biosynthesis. The polypeptide is Acyl carrier protein (Thermus thermophilus (strain ATCC BAA-163 / DSM 7039 / HB27)).